Here is a 114-residue protein sequence, read N- to C-terminus: MADRVLRGSRLGAVSYETDRNHDLAPRQVARYRTDNGEEFDVPFADDAEIPGTWLCRNGLEGTLIEGDVPEPKKVKPPRTHWDMLLERRSVEELEELLKERLDLIKAKRRGTGS.

The protein belongs to the RNA polymerase-binding protein RbpA family. As to quaternary structure, monomer. Forms a complex with the RNAP catalytic core, specifically with the beta subunit (RpoB); its binding site may overlap with that of Rif. May bind free principal sigma factors.

Functionally, binds to RNA polymerase (RNAP), probably stimulating transcriptions from principal, but not alternative sigma factor promoters. Partially restores transcription in the presence of rifampicin (Rif) in vitro; overexpression leads to an increase in the Rif tolerance in vivo, with smaller colonies. Seems to act by removing Rif from its binding site and preventing its further binding. No longer stimulates transcription in Rif-resistant RNA polymerase (with mutations in rpoB). This chain is RNA polymerase-binding protein RbpA, found in Mycolicibacterium smegmatis (strain ATCC 700084 / mc(2)155) (Mycobacterium smegmatis).